Here is a 493-residue protein sequence, read N- to C-terminus: ATP synthase subunit beta, chloroplastic (493 aa).

170–177 contacts ATP; that stretch reads GGAGVGKT.

It belongs to the ATPase alpha/beta chains family. As to quaternary structure, F-type ATPases have 2 components, CF(1) - the catalytic core - and CF(0) - the membrane proton channel. CF(1) has five subunits: alpha(3), beta(3), gamma(1), delta(1), epsilon(1). CF(0) has four main subunits: a(1), b(1), b'(1) and c(9-12).

The protein localises to the plastid. It is found in the chloroplast thylakoid membrane. It catalyses the reaction ATP + H2O + 4 H(+)(in) = ADP + phosphate + 5 H(+)(out). In terms of biological role, produces ATP from ADP in the presence of a proton gradient across the membrane. The catalytic sites are hosted primarily by the beta subunits. This is ATP synthase subunit beta, chloroplastic from Lachenalia pusilla (Cape cowslips).